We begin with the raw amino-acid sequence, 122 residues long: Basic phospholipase A2 PLA-B (122 aa).

7 disulfides stabilise this stretch: Cys26–Cys115, Cys28–Cys44, Cys43–Cys95, Cys49–Cys122, Cys50–Cys88, Cys57–Cys81, and Cys75–Cys86. Ca(2+) is bound by residues Tyr27, Gly29, and Gly31. The active site involves His47. Residue Asp48 participates in Ca(2+) binding. The active site involves Asp89.

It belongs to the phospholipase A2 family. Group II subfamily. D49 sub-subfamily. Requires Ca(2+) as cofactor. In terms of tissue distribution, expressed by the venom gland.

It localises to the secreted. It catalyses the reaction a 1,2-diacyl-sn-glycero-3-phosphocholine + H2O = a 1-acyl-sn-glycero-3-phosphocholine + a fatty acid + H(+). Functionally, snake venom phospholipase A2 (PLA2) that displays edema-inducing activities. PLA-B is three times more active than PLA-A in edema-inducing activities. PLA2 catalyzes the calcium-dependent hydrolysis of the 2-acyl groups in 3-sn-phosphoglycerides. The chain is Basic phospholipase A2 PLA-B from Protobothrops flavoviridis (Habu).